The sequence spans 858 residues: Taste receptor type 1 member 3 (858 aa).

Residues 1–20 (MPGLAILGLSLAAFLELGMG) form the signal peptide. The Extracellular portion of the chain corresponds to 21-575 (SSLCLSQQFK…FLAWGEPAVL (555 aa)). N85, N130, N203, N264, N379, N387, N418, N439, and N482 each carry an N-linked (GlcNAc...) asparagine glycan. The chain crosses the membrane as a helical span at residues 576-596 (SLLLLLCLVLGLTLAALGLFV). At 597 to 610 (HYWDSPLVQASGGS) the chain is on the cytoplasmic side. The chain crosses the membrane as a helical span at residues 611–631 (LFCFGLICLGLFCLSVLLFPG). At 632–644 (RPRSASCLAQQPM) the chain is on the extracellular side. Residues 645–665 (AHLPLTGCLSTLFLQAAEIFV) traverse the membrane as a helical segment. The Cytoplasmic portion of the chain corresponds to 666-687 (ESELPLSWANWLCSYLRGPWAW). The helical transmembrane segment at 688-708 (LVVLLATLVEAALCAWYLMAF) threads the bilayer. Over 709 to 735 (PPEVVTDWQVLPTEVLEHCRMRSWVSL) the chain is Extracellular. Residues 736–756 (GLVHITNAVLAFLCFLGTFLV) traverse the membrane as a helical segment. The Cytoplasmic segment spans residues 757-767 (QSQPGRYNRAR). A helical transmembrane segment spans residues 768–788 (GLTFAMLAYFIIWVSFVPLLA). Topologically, residues 789–796 (NVQVAYQP) are extracellular. Residues 797–817 (AVQMGAILFCALGILATFHLP) traverse the membrane as a helical segment. The Cytoplasmic portion of the chain corresponds to 818–858 (KCYVLLWLPELNTQEFFLGRSPKEASDGNSGSSEATRGHSE). The segment at 839–858 (PKEASDGNSGSSEATRGHSE) is disordered.

Belongs to the G-protein coupled receptor 3 family. TAS1R subfamily. Forms homodimers or heterodimers with TAS1R1 and TAS1R2.

It is found in the cell membrane. Its function is as follows. Putative taste receptor. TAS1R1/TAS1R3 responds to the umami taste stimulus (the taste of monosodium glutamate) and also to most of the 20 standard L-amino acids, but not to their D-enantiomers or other compounds. TAS1R2/TAS1R3 recognizes diverse natural and synthetic sweeteners. TAS1R3 is essential for the recognition and response to the disaccharide trehalose. Sequence differences within and between species can significantly influence the selectivity and specificity of taste responses. The polypeptide is Taste receptor type 1 member 3 (Tas1r3) (Rattus norvegicus (Rat)).